The following is a 428-amino-acid chain: Type II methyltransferase M.BanI (428 aa).

One can recognise an SAM-dependent MTase C5-type domain in the interval Ile-3–Glu-417. Cys-76 is an active-site residue.

This sequence belongs to the class I-like SAM-binding methyltransferase superfamily. C5-methyltransferase family. In terms of assembly, monomer.

The enzyme catalyses a 2'-deoxycytidine in DNA + S-adenosyl-L-methionine = a 5-methyl-2'-deoxycytidine in DNA + S-adenosyl-L-homocysteine + H(+). A methylase, recognizes the double-stranded sequence 5'-GGYRCC-3', methylates C-4 on both strands, and protects the DNA from cleavage by the BanI endonuclease. This is Type II methyltransferase M.BanI (banIM) from Aneurinibacillus aneurinilyticus (Bacillus aneurinolyticus).